The following is a 741-amino-acid chain: Ethylene receptor (741 aa).

3 helical membrane-spanning segments follow: residues 23–43 (ISDF…IYFV), 53–73 (WVLV…LINL), and 92–112 (VLTA…IPDL). Cu cation is bound by residues Cys-65 and His-69. In terms of domain architecture, GAF spans 158–307 (DRHTILKTTL…VVADQVAVAL (150 aa)). A Histidine kinase domain is found at 350-589 (VMNHEMRTPM…TFIVKLGFPE (240 aa)). His-353 is subject to Phosphohistidine; by autocatalysis. The 118-residue stretch at 615 to 732 (KVLVMDDNGV…KMRSVLSELL (118 aa)) folds into the Response regulatory domain. Asp-663 carries the 4-aspartylphosphate modification.

Belongs to the ethylene receptor family. As to quaternary structure, homodimer; disulfide-linked. Requires Cu cation as cofactor. Activation probably requires a transfer of a phosphate group between a His in the transmitter domain and an Asp of the receiver domain.

It is found in the endoplasmic reticulum membrane. The catalysed reaction is ATP + protein L-histidine = ADP + protein N-phospho-L-histidine.. Functionally, may act early in the ethylene signal transduction pathway, possibly as an ethylene receptor, or as a regulator of the pathway. The protein is Ethylene receptor (ETR1) of Malus domestica (Apple).